A 66-amino-acid polypeptide reads, in one-letter code: ATP synthase F(0) complex subunit 8 (66 aa).

Met-1 is modified (N-formylmethionine). Residues 8–24 form a helical membrane-spanning segment; it reads TWLTMILSMFLTLFIIF. The residue at position 54 (Lys-54) is an N6-acetyllysine; alternate. Lys-54 is subject to N6-succinyllysine; alternate. At Lys-57 the chain carries N6-acetyllysine.

This sequence belongs to the ATPase protein 8 family. Component of the ATP synthase complex composed at least of ATP5F1A/subunit alpha, ATP5F1B/subunit beta, ATP5MC1/subunit c (homooctomer), MT-ATP6/subunit a, MT-ATP8/subunit 8, ATP5ME/subunit e, ATP5MF/subunit f, ATP5MG/subunit g, ATP5MK/subunit k, ATP5MJ/subunit j, ATP5F1C/subunit gamma, ATP5F1D/subunit delta, ATP5F1E/subunit epsilon, ATP5PF/subunit F6, ATP5PB/subunit b, ATP5PD/subunit d, ATP5PO/subunit OSCP. ATP synthase complex consists of a soluble F(1) head domain (subunits alpha(3) and beta(3)) - the catalytic core - and a membrane F(0) domain - the membrane proton channel (subunits c, a, 8, e, f, g, k and j). These two domains are linked by a central stalk (subunits gamma, delta, and epsilon) rotating inside the F1 region and a stationary peripheral stalk (subunits F6, b, d, and OSCP). Interacts with PRICKLE3.

It is found in the mitochondrion membrane. Functionally, subunit 8, of the mitochondrial membrane ATP synthase complex (F(1)F(0) ATP synthase or Complex V) that produces ATP from ADP in the presence of a proton gradient across the membrane which is generated by electron transport complexes of the respiratory chain. ATP synthase complex consist of a soluble F(1) head domain - the catalytic core - and a membrane F(1) domain - the membrane proton channel. These two domains are linked by a central stalk rotating inside the F(1) region and a stationary peripheral stalk. During catalysis, ATP synthesis in the catalytic domain of F(1) is coupled via a rotary mechanism of the central stalk subunits to proton translocation. In vivo, can only synthesize ATP although its ATP hydrolase activity can be activated artificially in vitro. Part of the complex F(0) domain. This Bos taurus (Bovine) protein is ATP synthase F(0) complex subunit 8.